A 428-amino-acid chain; its full sequence is Chaperone SurA (428 aa).

The signal sequence occupies residues 1–20; that stretch reads MKNWKTLLLGIAMIANTSFA. PpiC domains are found at residues 171–272 and 282–382; these read STEL…KVND and VTEV…ELLD.

Its subcellular location is the periplasm. The enzyme catalyses [protein]-peptidylproline (omega=180) = [protein]-peptidylproline (omega=0). Its function is as follows. Chaperone involved in the correct folding and assembly of outer membrane proteins. Recognizes specific patterns of aromatic residues and the orientation of their side chains, which are found more frequently in integral outer membrane proteins. May act in both early periplasmic and late outer membrane-associated steps of protein maturation. This Salmonella choleraesuis (strain SC-B67) protein is Chaperone SurA.